The following is a 96-amino-acid chain: Co-chaperonin GroES (96 aa).

This sequence belongs to the GroES chaperonin family. Heptamer of 7 subunits arranged in a ring. Interacts with the chaperonin GroEL.

It localises to the cytoplasm. In terms of biological role, together with the chaperonin GroEL, plays an essential role in assisting protein folding. The GroEL-GroES system forms a nano-cage that allows encapsulation of the non-native substrate proteins and provides a physical environment optimized to promote and accelerate protein folding. GroES binds to the apical surface of the GroEL ring, thereby capping the opening of the GroEL channel. This chain is Co-chaperonin GroES, found in Photobacterium profundum (strain SS9).